Consider the following 466-residue polypeptide: ATP synthase subunit beta (466 aa).

153–160 (GGAGVGKT) is an ATP binding site.

It belongs to the ATPase alpha/beta chains family. F-type ATPases have 2 components, CF(1) - the catalytic core - and CF(0) - the membrane proton channel. CF(1) has five subunits: alpha(3), beta(3), gamma(1), delta(1), epsilon(1). CF(0) has three main subunits: a(1), b(2) and c(9-12). The alpha and beta chains form an alternating ring which encloses part of the gamma chain. CF(1) is attached to CF(0) by a central stalk formed by the gamma and epsilon chains, while a peripheral stalk is formed by the delta and b chains.

The protein localises to the cell membrane. It carries out the reaction ATP + H2O + 4 H(+)(in) = ADP + phosphate + 5 H(+)(out). Produces ATP from ADP in the presence of a proton gradient across the membrane. The catalytic sites are hosted primarily by the beta subunits. This chain is ATP synthase subunit beta, found in Leuconostoc mesenteroides subsp. mesenteroides (strain ATCC 8293 / DSM 20343 / BCRC 11652 / CCM 1803 / JCM 6124 / NCDO 523 / NBRC 100496 / NCIMB 8023 / NCTC 12954 / NRRL B-1118 / 37Y).